A 794-amino-acid chain; its full sequence is FT-interacting protein 1 (794 aa).

The span at 1-27 (MAAKDGAKSQEDYKLKDMKPELGERWP) shows a compositional bias: basic and acidic residues. The disordered stretch occupies residues 1–34 (MAAKDGAKSQEDYKLKDMKPELGERWPHGGQRGG). C2 domains lie at 37-158 (WIGS…PQWY), 198-321 (VQGE…SKWY), and 364-492 (YISD…THSY). Positions 76, 123, 125, and 131 each coordinate Ca(2+). 4 helical membrane-spanning segments follow: residues 510-532 (LAVR…PLLP), 595-615 (IVSV…VCYW), 619-639 (LTTI…ELIL), and 737-757 (LFVI…FKII).

The protein belongs to the MCTP family. In terms of assembly, interacts with FT in phloem companion cells. It depends on Ca(2+) as a cofactor. Expressed in the vascular tissues of roots, cotyledons and rosette leaves. Specifically located in the phloem including companion cells. Observed in flowers. Not detected in the shoot apical meristem.

Its subcellular location is the endoplasmic reticulum membrane. It is found in the cell junction. The protein resides in the plasmodesma. Its function is as follows. Involved in the export of FT from the phloem companion cells to the sieve elements through the plasmodesmata. Regulates flowering time under long days. May function as a signaling molecule by regulating the trafficking of other regulators. The protein is FT-interacting protein 1 of Arabidopsis thaliana (Mouse-ear cress).